The sequence spans 319 residues: ATP-dependent 6-phosphofructokinase (319 aa).

Gly-11 serves as a coordination point for ATP. Residue 21–25 participates in ADP binding; that stretch reads RAVVR. Residues 72 to 73 and 102 to 105 contribute to the ATP site; these read RS and GDGS. Asp-103 contributes to the Mg(2+) binding site. A substrate-binding site is contributed by 125-127; that stretch reads TID. Asp-127 functions as the Proton acceptor in the catalytic mechanism. Position 154 (Arg-154) interacts with ADP. Residues Arg-162 and 169 to 171 each bind substrate; that span reads MGR. ADP contacts are provided by residues 185-187, Arg-211, and 213-215; these read GAE and KKH. Substrate-binding positions include Glu-222, Arg-243, and 249 to 252; that span reads HVQR.

Belongs to the phosphofructokinase type A (PFKA) family. ATP-dependent PFK group I subfamily. Prokaryotic clade 'B1' sub-subfamily. As to quaternary structure, homotetramer. Requires Mg(2+) as cofactor.

The protein localises to the cytoplasm. It carries out the reaction beta-D-fructose 6-phosphate + ATP = beta-D-fructose 1,6-bisphosphate + ADP + H(+). The protein operates within carbohydrate degradation; glycolysis; D-glyceraldehyde 3-phosphate and glycerone phosphate from D-glucose: step 3/4. Allosterically activated by ADP and other diphosphonucleosides, and allosterically inhibited by phosphoenolpyruvate. Functionally, catalyzes the phosphorylation of D-fructose 6-phosphate to fructose 1,6-bisphosphate by ATP, the first committing step of glycolysis. In Natranaerobius thermophilus (strain ATCC BAA-1301 / DSM 18059 / JW/NM-WN-LF), this protein is ATP-dependent 6-phosphofructokinase.